Here is a 302-residue protein sequence, read N- to C-terminus: MAPRLRRNLSTDTDTNTTAAATAVATLERPATADAQHTADAQHTADAQHTADAQHTAETAETRGADGAAIRIRGLRRTFGNHTVLDGLDLTVASGEFVALLGRSGSGKSTLIRILGGFDGGISGEVLATRQRSVVFQEARLLPWTRTLANVTIGLSGRDVAERGRVALAEVGLAGRERSWPVALSGGEAQRVALARALVREPDLVMLDEPFGALDALTRIRMHALLQQLCRRHRPAVLFVTHDVDEAILLADRVLVLTEGRLSLDVPVDVASPRRRTDPAFDRLRSTLLAELGVDELAEGDH.

A compositionally biased stretch (low complexity) spans 30–57; it reads PATADAQHTADAQHTADAQHTADAQHTA. The tract at residues 30 to 65 is disordered; it reads PATADAQHTADAQHTADAQHTADAQHTAETAETRGA. The region spanning 70-284 is the ABC transporter domain; sequence IRIRGLRRTF…RRTDPAFDRL (215 aa). 102–109 provides a ligand contact to ATP; sequence GRSGSGKS.

Belongs to the ABC transporter superfamily. Aliphatic sulfonates importer (TC 3.A.1.17.2) family. The complex is composed of two ATP-binding proteins (SsuB), two transmembrane proteins (SsuC) and a solute-binding protein (SsuA).

The protein localises to the cell membrane. It catalyses the reaction ATP + H2O + aliphatic sulfonate-[sulfonate-binding protein]Side 1 = ADP + phosphate + aliphatic sulfonateSide 2 + [sulfonate-binding protein]Side 1.. Functionally, part of the ABC transporter complex SsuABC involved in aliphatic sulfonates import. Responsible for energy coupling to the transport system. This Frankia casuarinae (strain DSM 45818 / CECT 9043 / HFP020203 / CcI3) protein is Aliphatic sulfonates import ATP-binding protein SsuB.